Here is a 539-residue protein sequence, read N- to C-terminus: Keratin, type II cytoskeletal 73 (539 aa).

The tract at residues 1 to 130 (MNRQFTCKPG…DPEIQKVRAQ (130 aa)) is head. Residues 131 to 166 (EREQIKALNNKFASFIDKVRFLEQQNQVLQTKWELL) are coil 1A. In terms of domain architecture, IF rod spans 131–444 (EREQIKALNN…KLLEGEECRM (314 aa)). A linker 1 region spans residues 167–185 (QQLDLSNCRRNLEPVYEAH). A coil 1B region spans residues 186–277 (ISSLQKQLDS…CLYEGEITQM (92 aa)). The linker 12 stretch occupies residues 278-301 (QSHISDTSVVLSMDNNRNLDLDSI). Positions 302–440 (IAEVRAQYED…ATYRKLLEGE (139 aa)) are coil 2. The tract at residues 441–539 (ECRMSGEHTS…LGSPSKKTMR (99 aa)) is tail.

The protein belongs to the intermediate filament family. Heterotetramer of two type I and two type II keratins.

In terms of biological role, has a role in hair formation. Specific component of keratin intermediate filaments in the inner root sheath (IRS) of the hair follicle. In Mus musculus (Mouse), this protein is Keratin, type II cytoskeletal 73 (Krt73).